A 470-amino-acid chain; its full sequence is ATP synthase subunit beta (470 aa).

148–155 lines the ATP pocket; that stretch reads GGAGVGKT.

This sequence belongs to the ATPase alpha/beta chains family. F-type ATPases have 2 components, CF(1) - the catalytic core - and CF(0) - the membrane proton channel. CF(1) has five subunits: alpha(3), beta(3), gamma(1), delta(1), epsilon(1). CF(0) has three main subunits: a(1), b(2) and c(9-12). The alpha and beta chains form an alternating ring which encloses part of the gamma chain. CF(1) is attached to CF(0) by a central stalk formed by the gamma and epsilon chains, while a peripheral stalk is formed by the delta and b chains.

It localises to the cell inner membrane. The enzyme catalyses ATP + H2O + 4 H(+)(in) = ADP + phosphate + 5 H(+)(out). Functionally, produces ATP from ADP in the presence of a proton gradient across the membrane. The catalytic sites are hosted primarily by the beta subunits. The protein is ATP synthase subunit beta of Teredinibacter turnerae (strain ATCC 39867 / T7901).